Reading from the N-terminus, the 301-residue chain is NAD kinase (301 aa).

The Proton acceptor role is filled by Asp84. NAD(+) is bound by residues 84 to 85, Arg89, 158 to 159, Lys169, Asn188, 199 to 204, and Gln258; these read DG, NE, and TAYSFS.

It belongs to the NAD kinase family. The cofactor is a divalent metal cation.

It is found in the cytoplasm. It catalyses the reaction NAD(+) + ATP = ADP + NADP(+) + H(+). Its function is as follows. Involved in the regulation of the intracellular balance of NAD and NADP, and is a key enzyme in the biosynthesis of NADP. Catalyzes specifically the phosphorylation on 2'-hydroxyl of the adenosine moiety of NAD to yield NADP. The chain is NAD kinase from Tropheryma whipplei (strain Twist) (Whipple's bacillus).